A 199-amino-acid chain; its full sequence is Inner membrane-spanning protein YciB (199 aa).

Helical transmembrane passes span 3–23, 47–67, 76–96, 119–139, and 149–169; these read LLID…WGIY, VEPM…ATLL, WKPS…QLVF, LNWS…VIAY, and FKLF…AIYM. The disordered stretch occupies residues 180–199; that stretch reads AAAATPDALPPPGVQQDKQP.

The protein belongs to the YciB family.

It localises to the cell inner membrane. Its function is as follows. Plays a role in cell envelope biogenesis, maintenance of cell envelope integrity and membrane homeostasis. This is Inner membrane-spanning protein YciB from Delftia acidovorans (strain DSM 14801 / SPH-1).